The chain runs to 135 residues: uncharacterized protein (135 aa).

Belongs to the MG067/MG068/MG395 family.

This is an uncharacterized protein from Mycoplasma pneumoniae (strain ATCC 29342 / M129 / Subtype 1) (Mycoplasmoides pneumoniae).